A 441-amino-acid chain; its full sequence is tRNA-2-methylthio-N(6)-dimethylallyladenosine synthase (441 aa).

An MTTase N-terminal domain is found at 5-120; sequence KLLYIETFGC…LPEMVRAAEQ (116 aa). [4Fe-4S] cluster-binding residues include cysteine 14, cysteine 50, cysteine 83, cysteine 158, cysteine 162, and cysteine 165. One can recognise a Radical SAM core domain in the interval 144 to 374; that stretch reads EGGGVTRFVT…QGLQRDMTIE (231 aa). In terms of domain architecture, TRAM spans 377–439; that stretch reads AGFVGTCQAV…PNSLLGELAV (63 aa).

It belongs to the methylthiotransferase family. MiaB subfamily. Monomer. Requires [4Fe-4S] cluster as cofactor.

It is found in the cytoplasm. The enzyme catalyses N(6)-dimethylallyladenosine(37) in tRNA + (sulfur carrier)-SH + AH2 + 2 S-adenosyl-L-methionine = 2-methylsulfanyl-N(6)-dimethylallyladenosine(37) in tRNA + (sulfur carrier)-H + 5'-deoxyadenosine + L-methionine + A + S-adenosyl-L-homocysteine + 2 H(+). Catalyzes the methylthiolation of N6-(dimethylallyl)adenosine (i(6)A), leading to the formation of 2-methylthio-N6-(dimethylallyl)adenosine (ms(2)i(6)A) at position 37 in tRNAs that read codons beginning with uridine. The protein is tRNA-2-methylthio-N(6)-dimethylallyladenosine synthase of Geobacter metallireducens (strain ATCC 53774 / DSM 7210 / GS-15).